The sequence spans 784 residues: Ubiquitin carboxyl-terminal hydrolase 1 (784 aa).

Disordered regions lie at residues 1-21 (MPGVIPSESNGLSRGSPSKKN) and 34-56 (KRALDFTDSQENEEKTSEYRGSE). Residues 7–16 (SESNGLSRGS) show a composition bias toward polar residues. Phosphoserine is present on residues Ser-16 and Ser-42. Over residues 45–56 (NEEKTSEYRGSE) the composition is skewed to basic and acidic residues. At Ser-67 the chain carries Phosphoserine. Residues 81 to 784 (VGLNNLGNTC…TPYLLFYKKL (704 aa)) enclose the USP domain. The Nucleophile role is filled by Cys-90. 2 stretches are compositionally biased toward basic and acidic residues: residues 233 to 243 (VEEQSLQKEET) and 252 to 264 (DSMRNTEDVKEQL). Disordered regions lie at residues 233-342 (VEEQ…INWL) and 362-414 (TTNQ…KSGN). A Phosphoserine modification is found at Ser-474. Residue His-592 is the Proton acceptor of the active site. The disordered stretch occupies residues 684–725 (NPDKVVGTPFTDNRNSETNDTTNGTHESDRNKESSDQTGVNM). Residues 693-708 (FTDNRNSETNDTTNGT) show a composition bias toward polar residues. Positions 709–718 (HESDRNKESS) are enriched in basic and acidic residues. Ser-767 carries the phosphoserine modification.

Belongs to the peptidase C19 family. In terms of assembly, interacts with FANCD2 and PCNA. Interacts with WDR48. Interacts with ATAD5; the interaction regulates USP1-mediated PCNA deubiquitination. Post-translationally, autocatalytic cleavage of USP1 following UV irradiation inactivates it, leading to an increase in ubiquitinated PCNA, recruitment of POLH and translesion synthesis. Ubiquitinated by the CRL2(KLHDC2) complex following autocatalytic cleavage, leading to its degradation: the CRL2(KLHDC2) complex recognizes the diglycine (Gly-Gly) at the C-terminus.

It is found in the nucleus. It carries out the reaction Thiol-dependent hydrolysis of ester, thioester, amide, peptide and isopeptide bonds formed by the C-terminal Gly of ubiquitin (a 76-residue protein attached to proteins as an intracellular targeting signal).. In terms of biological role, negative regulator of DNA damage repair which specifically deubiquitinates monoubiquitinated FANCD2. Also involved in PCNA-mediated translesion synthesis (TLS) by deubiquitinating monoubiquitinated PCNA. Has almost no deubiquitinating activity by itself and requires the interaction with WDR48 to have a high activity. This Mus musculus (Mouse) protein is Ubiquitin carboxyl-terminal hydrolase 1.